The following is a 1270-amino-acid chain: Myosin-binding protein C, cardiac-type (1270 aa).

An N-acetylmethionine modification is found at M1. Residues 1–24 are disordered; the sequence is MPEPGKKPVSAFNKKPRSAEVTAG. 2 positions are modified to phosphoserine: S47 and S72. Over residues 94–105 the composition is skewed to basic and acidic residues; sequence VTEPAPPEKAES. The interval 94–152 is disordered; sequence VTEPAPPEKAESEVAPGAPEEVPAPATELEESVSSPEGSVSVTQDGSAAEHQGAPDDPI. Residues 106–135 are compositionally biased toward low complexity; the sequence is EVAPGAPEEVPAPATELEESVSSPEGSVSV. In terms of domain architecture, Ig-like C2-type 1 spans 151–254; it reads PIGLFLMRPQ…FDSCNFNLTV (104 aa). Q206, H208, E221, and H223 together coordinate Zn(2+). Phosphoserine; by PKA and PKC occurs at positions 273, 282, and 302. Residues S307 and S423 each carry the phosphoserine modification. 4 Ig-like C2-type domains span residues 358 to 448, 449 to 539, 540 to 629, and 641 to 767; these read STAF…VKEP, PVLI…VQEK, KLEV…HFME, and PKIH…VIDV. An intrachain disulfide couples C432 to C439. Residues S455 and S546 each carry the phosphoserine modification. T603 carries the post-translational modification Phosphothreonine. The disordered stretch occupies residues 683 to 702; sequence VTQGKKASAGPHPDAPEDAG. Fibronectin type-III domains lie at 770-866 and 868-963; these read APAA…IGPP and EPTH…VQEI. The Ig-like C2-type 6 domain maps to 967–1061; that stretch reads PRLQLPRHLR…ATLILQIVDK (95 aa). The Fibronectin type-III 3 domain occupies 1064–1159; the sequence is PPQDIRIVET…TKEPVFIPRP (96 aa). In terms of domain architecture, Ig-like C2-type 7 spans 1177-1270; that stretch reads PSFTQPLANR…ECRLEVRVPQ (94 aa). Omega-N-methylarginine is present on R1237.

This sequence belongs to the immunoglobulin superfamily. MyBP family. Post-translationally, substrate for phosphorylation by PKA and PKC. Reversible phosphorylation appears to modulate contraction. Polyubiquitinated.

Thick filament-associated protein located in the crossbridge region of vertebrate striated muscle a bands. In vitro it binds MHC, F-actin and native thin filaments, and modifies the activity of actin-activated myosin ATPase. It may modulate muscle contraction or may play a more structural role. The chain is Myosin-binding protein C, cardiac-type (Mybpc3) from Mus musculus (Mouse).